Here is a 316-residue protein sequence, read N- to C-terminus: Ribose-phosphate pyrophosphokinase (316 aa).

ATP-binding positions include 42 to 44 (DGE) and 101 to 102 (RQ). Mg(2+)-binding residues include H135 and D174. K197 is an active-site residue. Residues R199, D223, and 227–231 (DTAGT) each bind D-ribose 5-phosphate.

The protein belongs to the ribose-phosphate pyrophosphokinase family. Class I subfamily. Homohexamer. Mg(2+) serves as cofactor.

It localises to the cytoplasm. The catalysed reaction is D-ribose 5-phosphate + ATP = 5-phospho-alpha-D-ribose 1-diphosphate + AMP + H(+). The protein operates within metabolic intermediate biosynthesis; 5-phospho-alpha-D-ribose 1-diphosphate biosynthesis; 5-phospho-alpha-D-ribose 1-diphosphate from D-ribose 5-phosphate (route I): step 1/1. Involved in the biosynthesis of the central metabolite phospho-alpha-D-ribosyl-1-pyrophosphate (PRPP) via the transfer of pyrophosphoryl group from ATP to 1-hydroxyl of ribose-5-phosphate (Rib-5-P). The sequence is that of Ribose-phosphate pyrophosphokinase from Halalkalibacterium halodurans (strain ATCC BAA-125 / DSM 18197 / FERM 7344 / JCM 9153 / C-125) (Bacillus halodurans).